The primary structure comprises 65 residues: Large ribosomal subunit protein bL35 (65 aa).

Belongs to the bacterial ribosomal protein bL35 family.

The sequence is that of Large ribosomal subunit protein bL35 from Synechococcus sp. (strain CC9605).